The chain runs to 413 residues: Docking protein 2 (413 aa).

The PH domain occupies Val-4 to Phe-114. The region spanning Pro-147 to Gly-252 is the IRS-type PTB domain. The segment at Asn-247 to Gln-292 is disordered. Over residues Pro-250–Glu-268 the composition is skewed to pro residues. Phosphotyrosine is present on Tyr-271. A compositionally biased stretch (pro residues) spans Ser-277–Thr-289. Phosphotyrosine is present on residues Tyr-300 and Tyr-346. The segment covering Gln-362 to Gly-381 has biased composition (basic and acidic residues). Residues Gln-362–Lys-383 form a disordered region.

This sequence belongs to the DOK family. Type A subfamily. In terms of assembly, interacts with phosphorylated RASGAP and EGFR. Interacts with RET and NCK. Interacts (via PH domain) with TEK/TIE2 (tyrosine phosphorylated). Post-translationally, on immunoreceptor stimulation, phosphorylated on C-terminal tyrosine residues. Phosphorylation on Tyr-346 is required for binding to the SH2 domain of NCK. Phosphorylation on both Tyr-271 and Tyr-300 is required for interaction with RASGAP. Phosphorylated on tyrosine residues by TEK/TIE2.

Functionally, DOK proteins are enzymatically inert adaptor or scaffolding proteins. They provide a docking platform for the assembly of multimolecular signaling complexes. DOK2 may modulate the cellular proliferation induced by IL-4, as well as IL-2 and IL-3. May be involved in modulating Bcr-Abl signaling. Attenuates EGF-stimulated MAP kinase activation. The sequence is that of Docking protein 2 (DOK2) from Bos taurus (Bovine).